The following is a 269-amino-acid chain: Shikimate dehydrogenase (NADP(+)) (269 aa).

Residues 14-16 (TLS) and Thr60 contribute to the shikimate site. Lys64 (proton acceptor) is an active-site residue. NADP(+) is bound at residue Asp76. Positions 85 and 100 each coordinate shikimate. Residues 122-126 (GAGGA) and Met208 contribute to the NADP(+) site. Tyr210 serves as a coordination point for shikimate. Gly232 is a binding site for NADP(+).

This sequence belongs to the shikimate dehydrogenase family. In terms of assembly, homodimer.

The catalysed reaction is shikimate + NADP(+) = 3-dehydroshikimate + NADPH + H(+). Its pathway is metabolic intermediate biosynthesis; chorismate biosynthesis; chorismate from D-erythrose 4-phosphate and phosphoenolpyruvate: step 4/7. Its function is as follows. Involved in the biosynthesis of the chorismate, which leads to the biosynthesis of aromatic amino acids. Catalyzes the reversible NADPH linked reduction of 3-dehydroshikimate (DHSA) to yield shikimate (SA). This chain is Shikimate dehydrogenase (NADP(+)), found in Caldivirga maquilingensis (strain ATCC 700844 / DSM 13496 / JCM 10307 / IC-167).